Consider the following 453-residue polypeptide: Pentatricopeptide repeat-containing protein At2g38420, mitochondrial (453 aa).

The transit peptide at 1 to 77 (MARSSSWHRM…CEPTPQAYRF (77 aa)) directs the protein to the mitochondrion. PPR repeat units lie at residues 107–141 (PESI…RCVP), 142–177 (SAYT…GVRL), 178–212 (EEST…SVIV), 213–249 (DPRL…RFSP), 250–284 (GLRD…RVEP), 285–319 (DLVC…GLAP), 320–354 (DVYT…GSEP), 355–389 (NVVT…GVNR), and 390–424 (NSHT…NVFV).

Belongs to the PPR family. P subfamily.

The protein resides in the mitochondrion. The polypeptide is Pentatricopeptide repeat-containing protein At2g38420, mitochondrial (Arabidopsis thaliana (Mouse-ear cress)).